We begin with the raw amino-acid sequence, 137 residues long: MGLRSCTHFATLVIPLWALAFCFLVVVPVPAQTNLQTSKGDRRLQDLESNMGAESDQPNANLVRPSLSRFGDKRNQKIITFGRRVPRPMIPIELDLLMDNDDENTKAKRFDDYGHMRFGKRGGDDQFDDYGHMRFGR.

Positions Met1 to Ala31 are cleaved as a signal peptide. Residues Gln32 to Arg74 constitute a propeptide that is removed on maturation. At Phe81 the chain carries Phenylalanine amide. A propeptide spanning residues Val85–Ala107 is cleaved from the precursor. Tyr113 is subject to Sulfotyrosine. Phenylalanine amide is present on Phe118. Tyr130 is modified (sulfotyrosine). Position 135 is a phenylalanine amide (Phe135).

Belongs to the gastrin/cholecystokinin family.

The protein resides in the secreted. Its function is as follows. Drosulfakinin-0 (DSK 0) plays diverse biological roles including regulating gut muscle contraction in adults but not in larvae. The polypeptide is Drosulfakinins (Drosophila yakuba (Fruit fly)).